The chain runs to 33 residues: Photosystem II reaction center protein Psb30 (33 aa).

A helical membrane pass occupies residues 7-27; it reads IQLGSLTLITLTGPLIIGIIF.

This sequence belongs to the Psb30/Ycf12 family. PSII is composed of 1 copy each of membrane proteins PsbA, PsbB, PsbC, PsbD, PsbE, PsbF, PsbH, PsbI, PsbJ, PsbK, PsbL, PsbM, PsbT, PsbY, PsbZ, Psb30/Ycf12, peripheral proteins of the oxygen-evolving complex and a large number of cofactors. It forms dimeric complexes.

It is found in the plastid. It localises to the chloroplast thylakoid membrane. A core subunit of photosystem II (PSII), probably helps stabilize the reaction center. This chain is Photosystem II reaction center protein Psb30, found in Euglena gracilis.